The following is a 332-amino-acid chain: Nuclear migration protein nudC (332 aa).

The interval 122 to 161 is disordered; that stretch reads RQQLLDSAGGEPSASNRDGISKPIEKVDDESDKSELGKLM. Residues 168 to 259 enclose the CS domain; sequence CTLENYTWTQ…NKMNWWSRLV (92 aa).

Belongs to the nudC family. In terms of assembly, interacts with PCID2.

It localises to the cytoplasm. In terms of biological role, chaperone protein with functions in nuclear localization and cytoplasmic mRNA trafficking. In postmitotic neurons, acts with nudE downstream of dar1 to ensure correct positioning of the nuclei in primary dendrites and as a consequence, is required for determining multipolar neuron morphology. Stabilizes PCID2 in the cytoplasm and thereby is required for promoting cytoplasmic mRNA trafficking. The polypeptide is Nuclear migration protein nudC (Drosophila melanogaster (Fruit fly)).